The sequence spans 1450 residues: Protein clueless (1450 aa).

Disordered stretches follow at residues 1–126 (MALE…PGSE) and 266–287 (KTRP…VSEP). Positions 29–60 (NNSSAGKKQQQQQQPNQNQNLVNGNGNAADGP) are enriched in low complexity. Positions 62-71 (AKKKGKKNRN) are enriched in basic residues. Serine 271 carries the phosphoserine modification. The Clu domain occupies 425-667 (RAEDAFSSKL…RTFPPDVNFL (243 aa)). 2 stretches are compositionally biased toward basic and acidic residues: residues 725 to 734 (KQSEKTEEKA) and 743 to 765 (KESS…EEKQ). Disordered stretches follow at residues 725-775 (KQSE…TKTA) and 959-1011 (PAVS…SDWT). A compositionally biased stretch (basic residues) spans 968-983 (KKRSNGNKHNKHKSKG). Residues 984-1008 (NKQQASGNQNGSSAGSSSGGSSSSS) are compositionally biased toward low complexity. TPR repeat units follow at residues 1102–1135 (AYNF…LNNV), 1228–1261 (ALID…NIKY), and 1263–1296 (GSKA…EKET). The disordered stretch occupies residues 1410–1450 (NNNGDTEAETKDATKDNKDLAGASTQLTNGDKDAETAVASS). Positions 1417 to 1428 (AETKDATKDNKD) are enriched in basic and acidic residues.

It belongs to the CLU family.

It is found in the cytoplasm. Its function is as follows. mRNA-binding protein involved in proper cytoplasmic distribution of mitochondria. The polypeptide is Protein clueless (Drosophila ananassae (Fruit fly)).